The sequence spans 296 residues: Probable lipid kinase YegS-like (296 aa).

Residues 1-130 form the DAGKc domain; sequence MPHTLLILNG…IDLAQVNGEH (130 aa). ATP-binding positions include threonine 37, 63–69, and threonine 92; that span reads GDGTINE. Leucine 212, aspartate 215, and leucine 217 together coordinate Mg(2+). The active-site Proton acceptor is glutamate 268.

It belongs to the diacylglycerol/lipid kinase family. YegS lipid kinase subfamily. The cofactor is Mg(2+). Requires Ca(2+) as cofactor.

It localises to the cytoplasm. Probably phosphorylates lipids; the in vivo substrate is unknown. This Yersinia pseudotuberculosis serotype I (strain IP32953) protein is Probable lipid kinase YegS-like.